The following is a 341-amino-acid chain: S-adenosylmethionine:tRNA ribosyltransferase-isomerase (341 aa).

This sequence belongs to the QueA family. In terms of assembly, monomer.

It is found in the cytoplasm. The enzyme catalyses 7-aminomethyl-7-carbaguanosine(34) in tRNA + S-adenosyl-L-methionine = epoxyqueuosine(34) in tRNA + adenine + L-methionine + 2 H(+). It participates in tRNA modification; tRNA-queuosine biosynthesis. In terms of biological role, transfers and isomerizes the ribose moiety from AdoMet to the 7-aminomethyl group of 7-deazaguanine (preQ1-tRNA) to give epoxyqueuosine (oQ-tRNA). The chain is S-adenosylmethionine:tRNA ribosyltransferase-isomerase from Thermoanaerobacter sp. (strain X514).